The primary structure comprises 2324 residues: MDGQTRYLDELVGALRAERAQGRAGGYAGEFPPREGGGRARRVARTVVAKLADAEVADAAFWRACEALDLVFTGRPMVLAEALDEEAGVLWAVRSCWRVAAVHFGRRERGWALRRASSRWVRLCADLYGQRWRARVGAELDRELCAGEAAVRAVLGGGQEAGEHMRALRALCVAAEWAVSREFWFVTGGAERVGLRLQRLARLARYIGDAVELPLAEYEEVQVRLLGVSVQAYLEPDRPGLGELRFALEQLQYFVRGKHLRREFAAWSRLLLRLYVRCRSDRAALLLVREVLVLDAAELPEAATDAQRSLQLVRYDLERQFAADHALRWDPALRAKLLAAGTPPVILEPFTSNRQLEKLRLRVLCDFQVGDSALLVHQFSAAGVPLGADPVALYTHLDEGIARAFGRQDTEAQVRYLSLVRKLACLESRKPSPGFDCDLCDHTNLWLPRESIDPSRPEAASDSLAFKLLVGYYLREQLESSGEALVIGILITLRSIFTHFQPPKLVENHYGDMVDEHGCIQLFRMAFMSLNRHVRILSVLLIPYWNLSRSYNADEQQTALIIKFLQRNPDPHITETYLMAWTQLTLSTSGELFDSLLLKLIDIFNSSNFVEHVVMASQLKFIARVLNKTAYQLLSPILPILLKQIGKNLGEKKLSLERLLNLLEYSAKTVIENFQRYIVPYALTQYKGDALTEIAKIMCQNNEPSMVSEQKKRLLDRNSRQIFAVALVKHGLFSLETIETLFINNDPTFDRSYVAGFLPDYKTLAEVLKLFKPVEKVDSPMNDNERAVLSSLRFLFLTNFSVDKHRGSKFKNVTEWTQEKEAVFQKKLKDNILGIFQVFSSDMHDIEGKTTYFEKLRVISGISFLIKYASKECIISALAQVSICLQTGLEIPEMRYNTLRCWLHLVKYLSEEELSTVIDVLICFILQKWDEFSGKIQQAAIDILDALILEKQTLLTNSRPYIVLAFLNKSELHIFENHGFFARTASKLLKNTNWVSVFVSNLKSHNIYVIKQTLQDIRLFLEKKQDAGIDIKLISKDGKNISELLGALLDTSHKYRNSDLIICETCALCISMIGVLDVTKHELQRCNVYDNDICDFNNPTQTTKFLINIINERLVPSFWQSENPTKQLFVALVIQESLKYCGLSASSWDVTKPDLYPNESKLWNRFNDISKTTLYPLLSSLYLAQSWKEYVPLSYPSFKVKDGYSTWIKNLSLDLLKTATESSHPLHVFSSLIREDDGTLSDYLLPYIIMDIIIKAESGTKYFDYLQNVIKDFEYIFNYTLYDLNHYQIDGLKMCYDSIFRVFEYCKKWVNQFRQNYSKQHGTFTIREEKYTRMLNRAGKFADIIPSHVLAQKSLETNSFERSALYLEQSYREKSSNGLQDDKLLPYLQTTYAEINDIDAVVGVLKVFCSNNLTSRIEELQYSDNWKMAQDCFDALGDSLLNEQGGVENSVPTSRMLKLMYDHQLYDQTLKKLELNIPSKKRQLPLNLDEFYNMGIETASLSGNITELKIWIRRIEQLETLTDPSILLHYNLAKSLLAVLEGKTDMIETHSKYCYRLIGSHFTTPSHSTTLLKRRNLFIKLHGIRDNSILSKCSTDIQFNRSVRNLAVRFKNVGSDFEPNFYLLSMRKSHNLMRSEEFVKQDLADTYFKMAQLARENDRLDIASDCLMHALKLEHTEAELEYAEILWKQGEKELALKTVAEIHQKRKGIKTLKDRDRAKVLLKYTEWLDLSNNATSVQISHQYKEVIGLDKDWDEPYYSFGLYYSRLLEKKRADGFVTTGSLEYKAITYFLSAFEKNTVKVREALPKVITFWLDTASRSVESGSSEGEYHFKRYTKEICKCIDVAIQNCPTHIWYTVLTQLLSRLLHKHTDSATLIMNILLKLTLEYPSIMLWYITVLLNSQENKRVHAGKQIMDAIKKRMPDKSSLISSAISLVQAMTRVCIKDVKNMSSRSGKSLQNDFKFDINLAPSEMVVPVNINLANLSPSYADTSGKHGSSKRVTINCFTPHYKVYSSLKKPKKINIIGSDGELYGIMCKKEDVRQDNQYMQFANMMVFLLGKDSESRRRSLNITTYAILSLREDCGLIEIVPNVDTIRSILMAKYDSMKIKYTLSVLYEKWKSVSEEQRLGFYKSCTDTFPPVLYQWFLETFPNPIRWYNARNAFVRSYAVMAMVGHILGLGDRHLENILLDLQTGKVLHVDFDCLFEKGKTLPVPEIVPFRLTQNIQDAFGVTGTEGTFKKSSEVTVRVMRNNELALVNIIETIMYDRNMDHSIQNALRVLRNKVRGIDPRDDLPLSVPGQVDTVVQQASSDENLAQMYIGWLPFW.

In terms of domain architecture, FAT spans 1349 to 1901 (VLAQKSLETN…LWYITVLLNS (553 aa)). Residues 2005-2308 (FTPHYKVYSS…QVDTVVQQAS (304 aa)) form the PI3K/PI4K catalytic domain. A G-loop region spans residues 2011-2017 (VYSSLKK). The catalytic loop stretch occupies residues 2177–2185 (GLGDRHLEN). The segment at 2197–2221 (HVDFDCLFEKGKTLPVPEIVPFRLT) is activation loop. An FATC domain is found at 2292–2324 (LPLSVPGQVDTVVQQASSDENLAQMYIGWLPFW).

This sequence belongs to the PI3/PI4-kinase family. ATM subfamily.

The protein resides in the nucleus. It catalyses the reaction L-seryl-[protein] + ATP = O-phospho-L-seryl-[protein] + ADP + H(+). The enzyme catalyses L-threonyl-[protein] + ATP = O-phospho-L-threonyl-[protein] + ADP + H(+). Functionally, serine/threonine protein kinase which activates checkpoint signaling upon genotoxic stresses such as ionizing radiation (IR), ultraviolet light (UV), or DNA replication stalling, thereby acting as a DNA damage sensor. Recognizes the substrate consensus sequence [ST]-Q. Recruited to DNA lesions in order to initiate the DNA repair by homologous recombination. Phosphorylates histone H2A to form H2AS128ph (gamma-H2A) at sites of DNA damage, also involved in the regulation of DNA damage response mechanism. Required for cell growth and meiotic recombination. This chain is Serine/threonine-protein kinase MEC1 (MEC1), found in Eremothecium gossypii (strain ATCC 10895 / CBS 109.51 / FGSC 9923 / NRRL Y-1056) (Yeast).